Reading from the N-terminus, the 260-residue chain is Phosphonates import ATP-binding protein PhnC 2 (260 aa).

An ABC transporter domain is found at 4 to 245 (IQINKATKTY…KNTLRTIYQR (242 aa)). 37-44 (GPSGAGKS) is an ATP binding site.

Belongs to the ABC transporter superfamily. Phosphonates importer (TC 3.A.1.9.1) family. In terms of assembly, the complex is composed of two ATP-binding proteins (PhnC), two transmembrane proteins (PhnE) and a solute-binding protein (PhnD).

The protein localises to the cell inner membrane. The catalysed reaction is phosphonate(out) + ATP + H2O = phosphonate(in) + ADP + phosphate + H(+). Part of the ABC transporter complex PhnCDE involved in phosphonates import. Responsible for energy coupling to the transport system. This chain is Phosphonates import ATP-binding protein PhnC 2, found in Trichodesmium erythraeum (strain IMS101).